The sequence spans 69 residues: Iota-conotoxin LtIIIA (69 aa).

An N-terminal signal peptide occupies residues 1–20; sequence MLKMGVLLFTFLVLFPLTTL. Residues 21–52 constitute a propeptide that is removed on maturation; it reads ELDTDRPVERHAAIKQDLKPQERRGIRLHAPR. 4-carboxyglutamate occurs at positions 54 and 57. 3 cysteine pairs are disulfide-bonded: Cys-55/Cys-67, Cys-56/Cys-65, and Cys-61/Cys-68. At Pro-58 the chain carries 4-hydroxyproline.

As to expression, expressed by the venom duct.

The protein localises to the secreted. Iota-conotoxins bind to voltage-gated sodium channels and act as agonists by shifting the voltage-dependence of activation to more hyperpolarized levels. This toxin enhances tetrodotoxin-sensitive sodium current in rat dorsal root ganglion neurons. This is Iota-conotoxin LtIIIA from Conus litteratus (Lettered cone).